The sequence spans 68 residues: DNA-directed RNA polymerase subunit omega (68 aa).

Belongs to the RNA polymerase subunit omega family. In terms of assembly, the RNAP catalytic core consists of 2 alpha, 1 beta, 1 beta' and 1 omega subunit. When a sigma factor is associated with the core the holoenzyme is formed, which can initiate transcription.

It carries out the reaction RNA(n) + a ribonucleoside 5'-triphosphate = RNA(n+1) + diphosphate. Promotes RNA polymerase assembly. Latches the N- and C-terminal regions of the beta' subunit thereby facilitating its interaction with the beta and alpha subunits. The polypeptide is DNA-directed RNA polymerase subunit omega (Citrifermentans bemidjiense (strain ATCC BAA-1014 / DSM 16622 / JCM 12645 / Bem) (Geobacter bemidjiensis)).